Here is a 302-residue protein sequence, read N- to C-terminus: tRNA pseudouridine synthase B (302 aa).

The active-site Nucleophile is the Asp-43.

It belongs to the pseudouridine synthase TruB family. Type 1 subfamily.

It carries out the reaction uridine(55) in tRNA = pseudouridine(55) in tRNA. In terms of biological role, responsible for synthesis of pseudouridine from uracil-55 in the psi GC loop of transfer RNAs. This chain is tRNA pseudouridine synthase B, found in Burkholderia mallei (strain NCTC 10247).